The following is an 833-amino-acid chain: ERAD-associated E3 ubiquitin-protein ligase component HRD3 (833 aa).

Positions 1-19 (MLLSTYLNWASVLLTIAGA) are cleaved as a signal peptide. 3 N-linked (GlcNAc...) asparagine glycosylation sites follow: Asn-105, Asn-127, and Asn-146. The stretch at 107–143 (TEAMYKLSQINLWGQYGYPHNKSVAFQYLQKFNDMTS) is one Sel1-like 1 repeat. Sel1-like repeat units follow at residues 147-184 (SSAL…RLGD) and 185-220 (LKAK…EEIK). N-linked (GlcNAc...) asparagine glycans are attached at residues Asn-424 and Asn-607. 2 Sel1-like repeats span residues 592–623 (TDAA…LKFS) and 624–659 (AQAL…EHNQ). Asn-688 and Asn-713 each carry an N-linked (GlcNAc...) asparagine glycan. Residues 752–772 (LLTMVCVLIIFAISMFFRTVA) form a helical membrane-spanning segment. Positions 789–818 (GNALGEEGNPENENEEDDENDDEGRARARN) are disordered. The segment covering 796–810 (GNPENENEEDDENDD) has biased composition (acidic residues).

It belongs to the sel-1 family. In terms of assembly, interacts with HRD1.

It is found in the endoplasmic reticulum membrane. Functionally, component of the endoplasmic reticulum quality control (ERQC) system involved in ubiquitin-dependent degradation of missfolded endoplasmic reticulum proteins. Component of the HRD1 ubiquitin ligase complex, which is part of the ERAD-L and ERAD-M pathways responsible for the rapid degradation of soluble lumenal and membrane proteins with misfolded lumenal domains (ERAD-L), or ER-membrane proteins with misfolded transmembrane domains (ERAD-M). ERAD-L substrates are ubiquitinated through HRD1 in conjunction with the E2 ubiquitin-conjugating enzymes UBC1 and UBC7-CUE1. Ubiquitinated substrates are then removed to the cytosol via the action of the UFD1-NPL4-CDC48/p97 (UNC) AAA ATPase complex and targeted to the proteasome. ERAD-M substrates are processed by the same HRD1-HRD3 core complex, but only a subset of the other components is required for ERAD-M. Stabilizes the HRD1 ubiquitin-protein ligase. Also has a function in recruiting misfolded protein substrates. In Candida glabrata (strain ATCC 2001 / BCRC 20586 / JCM 3761 / NBRC 0622 / NRRL Y-65 / CBS 138) (Yeast), this protein is ERAD-associated E3 ubiquitin-protein ligase component HRD3 (HRD3).